Here is a 435-residue protein sequence, read N- to C-terminus: Centrosomal protein of 55 kDa (435 aa).

Disordered stretches follow at residues 1 to 63, 213 to 239, and 268 to 287; these read MAAK…TDKA, HKEA…KVSR, and ERRR…ALLQ. 2 coiled-coil regions span residues 18 to 140 and 185 to 373; these read SSSS…KNKY and EAYV…RESR. 2 stretches are compositionally biased toward basic and acidic residues: residues 26–49 and 213–222; these read AELE…DMKR and HKEAKSDDQS.

The protein localises to the cytoplasm. Its subcellular location is the cytoskeleton. It is found in the microtubule organizing center. The protein resides in the centrosome. It localises to the centriole. The protein localises to the cleavage furrow. Its subcellular location is the midbody. It is found in the midbody ring. In terms of biological role, plays a role in mitotic exit and cytokinesis. Recruits PDCD6IP and TSG101 to midbody during cytokinesis. Required for successful completion of cytokinesis. Not required for microtubule nucleation. Plays a role in the development of the brain and kidney. The polypeptide is Centrosomal protein of 55 kDa (Danio rerio (Zebrafish)).